Consider the following 413-residue polypeptide: Methylaspartate ammonia-lyase (413 aa).

Residue glutamine 172 coordinates (2S,3S)-3-methyl-L-aspartate. 3 residues coordinate Mg(2+): aspartate 238, glutamate 273, and aspartate 307. Glutamine 329 provides a ligand contact to (2S,3S)-3-methyl-L-aspartate. Catalysis depends on lysine 331, which acts as the Proton acceptor. (2S,3S)-3-methyl-L-aspartate-binding positions include 360 to 361 (TC) and cysteine 361.

This sequence belongs to the methylaspartate ammonia-lyase family. Homodimer. Requires Mg(2+) as cofactor.

The enzyme catalyses (2S,3S)-3-methyl-L-aspartate = mesaconate + NH4(+). It functions in the pathway amino-acid degradation; L-glutamate degradation via mesaconate pathway; acetate and pyruvate from L-glutamate: step 2/4. Its activity is regulated as follows. Inhibited by calcium ions. Functionally, involved in the methylaspartate cycle. Catalyzes the formation of the alpha,beta-unsaturated bond by the reversible anti elimination of ammonia from L-threo-beta-methylaspartate (L-threo-(2S,3S)-3-methylaspartate) to give mesaconate. It can also use L-erythro-beta-methylaspartate (L-erythro-(2S,3R)-3-methylaspartate), L-aspartate, fumarate and ethylfumarate as substrates. This is Methylaspartate ammonia-lyase from Clostridium tetanomorphum.